The sequence spans 2555 residues: Plipastatin synthase subunit C (2555 aa).

Residues 7–306 (IQDIYPLSFM…NTIPIRAQSD (300 aa)) form a condensation 1 region. An adenylation 1 region spans residues 491-894 (TYAELDMYAS…SIEGVREAAV (404 aa)). Residues 967–1042 (APRNVTEMKL…GLATVIREGT (76 aa)) enclose the Carrier 1 domain. S1002 is subject to O-(pantetheine 4'-phosphoryl)serine. A condensation 2 region spans residues 1054 to 1344 (KQETYPVSSA…NTLALRTRPE (291 aa)). The adenylation 2 stretch occupies residues 1532–1927 (TYEDLNSWAN…QIDGVKEAAV (396 aa)). Positions 2003–2077 (PPRNELEEQL…DLSPFIRKSE (75 aa)) constitute a Carrier 2 domain. Residue S2038 is modified to O-(pantetheine 4'-phosphoryl)serine. Residues 2085-2548 (IQGDVPWTPV…SLTAEDLDSI (464 aa)) form an epimerization 3 region.

Belongs to the ATP-dependent AMP-binding enzyme family. It depends on pantetheine 4'-phosphate as a cofactor.

Its function is as follows. This protein is a multifunctional enzyme, able to activate and polymerize the amino acids Glu and Ala/Val as part of the biosynthesis of the lipopeptide antibiotic plipastatin. The Ala/Val residue is further epimerized to the D-isomer form. The activation sites for these amino acids consist of individual domains. The sequence is that of Plipastatin synthase subunit C (ppsC) from Bacillus subtilis (strain 168).